The chain runs to 258 residues: Small ribosomal subunit protein uS3 (258 aa).

Residues 16-85 (IDEYLEKELE…NPQVEVKEVD (70 aa)) enclose the KH type-2 domain. A disordered region spans residues 198–258 (RVTETPAEEA…KDADGEESEK (61 aa)). Acidic residues predominate over residues 203 to 245 (PAEEASEASEVVEDLEEVEDLEEIEDLEEVEDLEEVEDLEDTE).

This sequence belongs to the universal ribosomal protein uS3 family. As to quaternary structure, part of the 30S ribosomal subunit.

Functionally, binds the lower part of the 30S subunit head. In Methanothermobacter thermautotrophicus (strain ATCC 29096 / DSM 1053 / JCM 10044 / NBRC 100330 / Delta H) (Methanobacterium thermoautotrophicum), this protein is Small ribosomal subunit protein uS3.